The primary structure comprises 151 residues: MKVIFLQDVKNQGKRGQIKEVPDGYANNFLIKNKKAVYASPENISKLNGQQNLEAKKAAEILEEAKQLKNKLASTKTIVQFSEHVGPDGRLNGSVTAKEIADQLAKQFNLTVDKRKLQLPQPIKTIGLHEVPAKLHTQVSAMIKVNVSELN.

This sequence belongs to the bacterial ribosomal protein bL9 family.

Functionally, binds to the 23S rRNA. This Oenococcus oeni (strain ATCC BAA-331 / PSU-1) protein is Large ribosomal subunit protein bL9.